The primary structure comprises 86 residues: Small ribosomal subunit protein bS20 (86 aa).

The protein belongs to the bacterial ribosomal protein bS20 family.

In terms of biological role, binds directly to 16S ribosomal RNA. The sequence is that of Small ribosomal subunit protein bS20 from Pseudarthrobacter chlorophenolicus (strain ATCC 700700 / DSM 12829 / CIP 107037 / JCM 12360 / KCTC 9906 / NCIMB 13794 / A6) (Arthrobacter chlorophenolicus).